Consider the following 471-residue polypeptide: Bifunctional protein GlmU (471 aa).

The interval 1–232 (MSDITAVLLA…EEDALAPNDR (232 aa)) is pyrophosphorylase. Residues 9–12 (LAAG), Lys23, Gln73, 78–79 (GT), 102–104 (YGD), Gly141, Glu157, and Asn230 contribute to the UDP-N-acetyl-alpha-D-glucosamine site. Asp104 is a Mg(2+) binding site. Mg(2+) is bound at residue Asn230. The segment at 233-253 (VELARAEARLRRQINERHMRN) is linker. The tract at residues 254 to 471 (GVTIINPDAT…RQRKMNREGT (218 aa)) is N-acetyltransferase. Residues Arg335 and Lys353 each coordinate UDP-N-acetyl-alpha-D-glucosamine. The active-site Proton acceptor is His365. Residues Tyr368 and Asn379 each coordinate UDP-N-acetyl-alpha-D-glucosamine. Residues Ala382, 388-389 (NY), Ala425, and Arg444 each bind acetyl-CoA.

This sequence in the N-terminal section; belongs to the N-acetylglucosamine-1-phosphate uridyltransferase family. In the C-terminal section; belongs to the transferase hexapeptide repeat family. As to quaternary structure, homotrimer. Mg(2+) is required as a cofactor.

It is found in the cytoplasm. It carries out the reaction alpha-D-glucosamine 1-phosphate + acetyl-CoA = N-acetyl-alpha-D-glucosamine 1-phosphate + CoA + H(+). The catalysed reaction is N-acetyl-alpha-D-glucosamine 1-phosphate + UTP + H(+) = UDP-N-acetyl-alpha-D-glucosamine + diphosphate. The protein operates within nucleotide-sugar biosynthesis; UDP-N-acetyl-alpha-D-glucosamine biosynthesis; N-acetyl-alpha-D-glucosamine 1-phosphate from alpha-D-glucosamine 6-phosphate (route II): step 2/2. It participates in nucleotide-sugar biosynthesis; UDP-N-acetyl-alpha-D-glucosamine biosynthesis; UDP-N-acetyl-alpha-D-glucosamine from N-acetyl-alpha-D-glucosamine 1-phosphate: step 1/1. It functions in the pathway bacterial outer membrane biogenesis; LPS lipid A biosynthesis. Catalyzes the last two sequential reactions in the de novo biosynthetic pathway for UDP-N-acetylglucosamine (UDP-GlcNAc). The C-terminal domain catalyzes the transfer of acetyl group from acetyl coenzyme A to glucosamine-1-phosphate (GlcN-1-P) to produce N-acetylglucosamine-1-phosphate (GlcNAc-1-P), which is converted into UDP-GlcNAc by the transfer of uridine 5-monophosphate (from uridine 5-triphosphate), a reaction catalyzed by the N-terminal domain. This Symbiobacterium thermophilum (strain DSM 24528 / JCM 14929 / IAM 14863 / T) protein is Bifunctional protein GlmU.